The sequence spans 284 residues: Acetylglutamate kinase (284 aa).

Substrate is bound by residues 66-67 (GG), R88, and N179.

Belongs to the acetylglutamate kinase family. ArgB subfamily.

The protein resides in the cytoplasm. The enzyme catalyses N-acetyl-L-glutamate + ATP = N-acetyl-L-glutamyl 5-phosphate + ADP. The protein operates within amino-acid biosynthesis; L-arginine biosynthesis; N(2)-acetyl-L-ornithine from L-glutamate: step 2/4. Catalyzes the ATP-dependent phosphorylation of N-acetyl-L-glutamate. In Actinobacillus pleuropneumoniae serotype 5b (strain L20), this protein is Acetylglutamate kinase.